Reading from the N-terminus, the 239-residue chain is ATP-dependent dethiobiotin synthetase BioD (239 aa).

15 to 20 (EIGKTF) lines the ATP pocket. Thr-19 provides a ligand contact to Mg(2+). Residue Lys-40 is part of the active site. ATP contacts are provided by residues Asp-57, 118–121 (EGAG), and 178–179 (NH). Mg(2+) contacts are provided by Asp-57 and Glu-118.

It belongs to the dethiobiotin synthetase family. Homodimer. Mg(2+) serves as cofactor.

It localises to the cytoplasm. The enzyme catalyses (7R,8S)-7,8-diammoniononanoate + CO2 + ATP = (4R,5S)-dethiobiotin + ADP + phosphate + 3 H(+). Its pathway is cofactor biosynthesis; biotin biosynthesis; biotin from 7,8-diaminononanoate: step 1/2. Catalyzes a mechanistically unusual reaction, the ATP-dependent insertion of CO2 between the N7 and N8 nitrogen atoms of 7,8-diaminopelargonic acid (DAPA, also called 7,8-diammoniononanoate) to form a ureido ring. This is ATP-dependent dethiobiotin synthetase BioD from Burkholderia lata (strain ATCC 17760 / DSM 23089 / LMG 22485 / NCIMB 9086 / R18194 / 383).